The primary structure comprises 255 residues: Acetylglutamate kinase (255 aa).

Substrate is bound by residues 40–41, arginine 62, and asparagine 153; that span reads GG.

It belongs to the acetylglutamate kinase family. ArgB subfamily.

Its subcellular location is the cytoplasm. The enzyme catalyses N-acetyl-L-glutamate + ATP = N-acetyl-L-glutamyl 5-phosphate + ADP. It participates in amino-acid biosynthesis; L-arginine biosynthesis; N(2)-acetyl-L-ornithine from L-glutamate: step 2/4. In terms of biological role, catalyzes the ATP-dependent phosphorylation of N-acetyl-L-glutamate. The sequence is that of Acetylglutamate kinase from Bacillus anthracis (strain CDC 684 / NRRL 3495).